The chain runs to 462 residues: Argininosuccinate lyase (462 aa).

Belongs to the lyase 1 family. Argininosuccinate lyase subfamily.

It is found in the cytoplasm. The catalysed reaction is 2-(N(omega)-L-arginino)succinate = fumarate + L-arginine. The protein operates within amino-acid biosynthesis; L-arginine biosynthesis; L-arginine from L-ornithine and carbamoyl phosphate: step 3/3. This chain is Argininosuccinate lyase, found in Caldicellulosiruptor saccharolyticus (strain ATCC 43494 / DSM 8903 / Tp8T 6331).